The sequence spans 495 residues: Glutamate--tRNA ligase (495 aa).

A 'HIGH' region motif is present at residues 12–22 (PSPTGHLHIGN). Positions 259–263 (KLSKR) match the 'KMSKS' region motif. An ATP-binding site is contributed by K262.

Belongs to the class-I aminoacyl-tRNA synthetase family. Glutamate--tRNA ligase type 1 subfamily. As to quaternary structure, monomer.

The protein localises to the cytoplasm. The enzyme catalyses tRNA(Glu) + L-glutamate + ATP = L-glutamyl-tRNA(Glu) + AMP + diphosphate. Its function is as follows. Catalyzes the attachment of glutamate to tRNA(Glu) in a two-step reaction: glutamate is first activated by ATP to form Glu-AMP and then transferred to the acceptor end of tRNA(Glu). The chain is Glutamate--tRNA ligase from Latilactobacillus sakei subsp. sakei (strain 23K) (Lactobacillus sakei subsp. sakei).